The following is a 95-amino-acid chain: Small ribosomal subunit protein bS6 (95 aa).

It belongs to the bacterial ribosomal protein bS6 family. As to quaternary structure, part of the 30S ribosomal subunit.

Functionally, binds together with bS18 to 16S ribosomal RNA. The chain is Small ribosomal subunit protein bS6 (rpsF) from Bacillus subtilis (strain 168).